A 560-amino-acid chain; its full sequence is MNEKIVREQRGGEDSPSSVSAKSATAAASASTASMTFASAALESHKTTTITTASSSPRTSGASASASSSSRSASAPASSSSQQEKQPMLNATDMRELREIKQLLWGDNVREDVFKRWSQGFEFSKVEPSALVQKQGGPCAVIAPVQAYLLKIIIMDLPGIKLSEISLDKSQNLLIQALCDILKNCRAPRYRIVHLLRRRGNATEAGSTKKRSPAGEEESALAGQAAGSSEEVEEAAEATPASVSKLSQALQLEHDMHQELSPDEFHERLHTLHFKNIAAVARYYMENYDQLAHTYGVLLFMYSVFLTKGLELVAADISDTSEPLIHSTYGYGGQSLINLMLTGRAVAHVWDNEQDVGGLKLRGICEQSDIGFITLMEEMRYCTVGSFFKNPRYPVWVMGSDTHLTVLFSNEKRLVSPETPSETGRRIFKSYDPEGNNFISTTMLREVLIALNLVSEPAYVALMQKRLDPENLGIILLNAFMDEFFPLESRSTPDTFELMHYNGIPGSNENNKVRYYCGTAILLEGDLKSVCTSNPMVTCLQTKWPNIEINWHDGHMPSLN.

A compositionally biased stretch (basic and acidic residues) spans 1–13 (MNEKIVREQRGGE). Disordered regions lie at residues 1-30 (MNEKIVREQRGGEDSPSSVSAKSATAAASA) and 44-91 (SHKT…MLNA). Composition is skewed to low complexity over residues 15 to 30 (SPSSVSAKSATAAASA) and 52 to 81 (TASSSPRTSGASASASSSSRSASAPASSSS). The active-site Nucleophile is the cysteine 139. The segment at 203–237 (TEAGSTKKRSPAGEEESALAGQAAGSSEEVEEAAE) is disordered. Residues serine 212 and serine 219 each carry the phosphoserine modification. The active-site Proton acceptor is the histidine 403.

This sequence belongs to the MINDY deubiquitinase family. FAM188 subfamily.

The catalysed reaction is Thiol-dependent hydrolysis of ester, thioester, amide, peptide and isopeptide bonds formed by the C-terminal Gly of ubiquitin (a 76-residue protein attached to proteins as an intracellular targeting signal).. Its function is as follows. Hydrolase that can remove 'Lys-48'-linked conjugated ubiquitin from proteins. This is Ubiquitin carboxyl-terminal hydrolase MINDY-3 homolog (mindy3) from Drosophila melanogaster (Fruit fly).